Reading from the N-terminus, the 683-residue chain is Solute carrier organic anion transporter family member 2B1 (683 aa).

Positions 1–30 are disordered; the sequence is MPDRSTKTTMGTEDMHERKVSVEPQDSHQD. Topologically, residues 1–41 are cytoplasmic; sequence MPDRSTKTTMGTEDMHERKVSVEPQDSHQDAQPRGMFHNIK. A compositionally biased stretch (basic and acidic residues) spans 13-30; the sequence is EDMHERKVSVEPQDSHQD. Phosphoserine is present on Ser-21. The helical transmembrane segment at 42–61 threads the bilayer; the sequence is FFVLCHSLLQLTQLMISGYL. The Extracellular segment spans residues 62 to 80; sequence KSSISTVEKRFGLSSQISG. A helical transmembrane segment spans residues 81–101; sequence LLAAFNEVGNVSLILFVSYFG. The Cytoplasmic portion of the chain corresponds to 102 to 107; sequence SRVHRP. Residues 108-132 traverse the membrane as a helical segment; the sequence is RMIGYGALLVATAGLLMALPHFISE. Residues 133-177 lie on the Extracellular side of the membrane; it reads PYRYDHSSSDNRSLDFEASLCLPTTMAPASALSNGSCSSHTETKH. Asn-143 and Asn-166 each carry an N-linked (GlcNAc...) asparagine glycan. Residues 178–207 traverse the membrane as a helical segment; the sequence is LTMVGIMFAAQTLLGIGGVPIQPFGISYID. Residues 208–226 lie on the Cytoplasmic side of the membrane; the sequence is DFAHHSNSPLYIGILFGIT. A helical transmembrane segment spans residues 227–247; sequence TMGPGLAYGLGSLMLRLYVDI. Over 248–265 the chain is Extracellular; the sequence is DRMPEGGINLTPKDPRWV. Residues 266 to 290 traverse the membrane as a helical segment; it reads GAWWLGFLISSGLVVLASSPYFFFP. Over 291–355 the chain is Cytoplasmic; that stretch reads REMPKEKHEF…VKVFPRVLLR (65 aa). Ser-312 and Ser-315 each carry phosphoserine. The chain crosses the membrane as a helical span at residues 356–377; sequence NLRHPIFLLVVLSQVCTSSMVA. The Extracellular portion of the chain corresponds to 378-397; sequence GMATFLPKFLERQFSITASF. A helical membrane pass occupies residues 398–421; it reads ANMLLGCLTIPLVIVGIMMGGVLV. Residues 422 to 425 lie on the Cytoplasmic side of the membrane; sequence KRLH. Residues 426-449 traverse the membrane as a helical segment; it reads LSPVQCSALCLLGSLLCLLFSVPL. Residues 450–553 lie on the Extracellular side of the membrane; the sequence is FFIGCSTHQI…SACSRLVLPF (104 aa). Positions 472–532 constitute a Kazal-like domain; that stretch reads PSLFPGCSEP…VFYTNCSCVA (61 aa). 3 disulfide bridges follow: Cys-478–Cys-509, Cys-484–Cys-505, and Cys-493–Cys-530. Residues Asn-527 and Asn-534 are each glycosylated (N-linked (GlcNAc...) asparagine). The chain crosses the membrane as a helical span at residues 554 to 576; it reads IVLFSLGAGLASITHTPSFMLIL. At 577–585 the chain is on the cytoplasmic side; that stretch reads RGVKKEDKT. The helical transmembrane segment at 586-611 threads the bilayer; that stretch reads LAVGMQFMLLRVLAWMPSPVIHGSAI. Topologically, residues 612-644 are extracellular; it reads DTTCVHWALTCGRRAVCRYYDHDLLRNRFIGLQ. The helical transmembrane segment at 645–662 threads the bilayer; it reads FFFKSGSLVCFTLVLAIL. Residues 663–683 lie on the Cytoplasmic side of the membrane; that stretch reads RQQSREASTRTTVKSSELQQL.

Belongs to the organo anion transporter (TC 2.A.60) family. As to expression, expressed in liver, kidney, small intestine mucosa, large intestine, brain, lung, spleen, stomach and heart.

It is found in the cell membrane. The protein localises to the basal cell membrane. The protein resides in the apical cell membrane. It carries out the reaction dehydroepiandrosterone 3-sulfate(out) = dehydroepiandrosterone 3-sulfate(in). The catalysed reaction is estrone 3-sulfate(out) = estrone 3-sulfate(in). The enzyme catalyses estrone 3-sulfate(out) + hydrogencarbonate(in) = estrone 3-sulfate(in) + hydrogencarbonate(out). It catalyses the reaction taurocholate(out) = taurocholate(in). It carries out the reaction coproporphyrin III(out) = coproporphyrin III(in). The catalysed reaction is substance P(out) = substance P(in). The enzyme catalyses pregnenolone sulfate(out) = pregnenolone sulfate(in). It catalyses the reaction prostaglandin E2(out) = prostaglandin E2(in). It carries out the reaction prostaglandin D2(out) = prostaglandin D2(in). The catalysed reaction is L-thyroxine(out) = L-thyroxine(in). Mediates the Na(+)-independent transport of steroid sulfate conjugates such as estrone 3-sulfate (E1S), dehydroepiandrosterone sulfate (DHEA-S) and pregnenolone sulfate (PregS) and other specific organic anions. Responsible for the transport of E1S through the basal membrane of syncytiotrophoblast, highlighting a potential role in the placental absorption of fetal-derived sulfated steroids including DHEA-S. Also facilitates the uptake of sulfated steroids at the basal/sinusoidal membrane of hepatocytes, therefore accounting for the major part of organic anions clearance of liver. Mediates the intestinal uptake of sulfated steroids. Mediates the uptake of the neurosteroids DHEA-S and PregS into the endothelial cells of the blood-brain barrier as the first step to enter the brain. Also plays a role in the reuptake of neuropeptides such as substance P/TAC1 and vasoactive intestinal peptide/VIP released from retinal neurons. May act as a heme transporter that promotes cellular iron availability. Also transports heme by-product coproporphyrin III (CPIII), and may be involved in their hepatic disposition. Mediates the uptake of other substrates such as prostaglandins D2 (PGD2), E1 (PGE1) and E2 (PGE2), taurocholate, L-thyroxine, leukotriene C4 and thromboxane B2. May contribute to regulate the transport of organic compounds in testis across the blood-testis-barrier. Shows a pH-sensitive substrate specificity which may be ascribed to the protonation state of the binding site and leads to a stimulation of substrate transport in an acidic microenvironment. The exact transport mechanism has not been yet deciphered but most likely involves an anion exchange, coupling the cellular uptake of organic substrate with the efflux of an anionic compound. Hydrogencarbonate/HCO3(-) acts as a probable counteranion that exchanges for organic anions. Cytoplasmic glutamate may also act as counteranion in the placenta. An inwardly directed proton gradient has also been proposed as the driving force of E1S uptake with a (H(+):E1S) stoichiometry of (1:1). In Mus musculus (Mouse), this protein is Solute carrier organic anion transporter family member 2B1.